The chain runs to 568 residues: N66 matrix protein (568 aa).

Residues 1–22 (MWRMTTLLHLTALLVLIPLCHC) form the signal peptide. The region spanning 55-567 (AGFSYNRDIC…KHPLRVYKNS (513 aa)) is the Alpha-carbonic anhydrase domain. 3 residues coordinate Zn(2+): histidine 154, histidine 156, and histidine 179. The interval 259–421 (NGNNGNNGNG…NGYNGDNGNS (163 aa)) is disordered. A compositionally biased stretch (gly residues) spans 280–290 (GNNGNGNGNNG). A compositionally biased stretch (low complexity) spans 291–318 (YNGNNGYNGNNGNNGNGNNDNNGNDNNG). 2 stretches are compositionally biased toward gly residues: residues 319 to 352 (NNGG…GNNG) and 362 to 380 (NGNG…GNNG). N-linked (GlcNAc...) asparagine glycosylation is present at asparagine 389. A compositionally biased stretch (gly residues) spans 390-413 (GSNGNNGGNGNNGNNGDNGNGDNG). 506-507 (TT) lines the substrate pocket. N-linked (GlcNAc...) asparagine glycosylation occurs at asparagine 511.

It belongs to the alpha-carbonic anhydrase family. As to quaternary structure, homooligomer; disulfide-linked. May also be disulfide-linked to insoluble organic matrix. Zn(2+) is required as a cofactor. As to expression, expressed in both the dorsal region of the mantle and the mantle edge. Is dispersed in calcium carbonate and also linked by disulfide bonds to the organic core of nacre.

It localises to the secreted. Its subcellular location is the extracellular space. It is found in the extracellular matrix. It carries out the reaction hydrogencarbonate + H(+) = CO2 + H2O. Acts as a negative regulator for calcification in the shells of mollusks. May function both as a calcium concentrator and as a carbonic anhydrase required for production of carbonate ions, which are assembled to CaCO(3) at mineralization sites. Is important for shell formation in both the calcitic prismatic layer and the aragonitic nacreous layer. In Pinctada maxima (Silver-lipped pearl oyster), this protein is N66 matrix protein.